Reading from the N-terminus, the 391-residue chain is 3-ketoacyl-CoA thiolase (391 aa).

Cys95 (acyl-thioester intermediate) is an active-site residue. Active-site proton acceptor residues include His347 and Cys377.

This sequence belongs to the thiolase-like superfamily. Thiolase family. In terms of assembly, heterotetramer of two alpha chains (FadB) and two beta chains (FadA).

Its subcellular location is the cytoplasm. It catalyses the reaction an acyl-CoA + acetyl-CoA = a 3-oxoacyl-CoA + CoA. The protein operates within lipid metabolism; fatty acid beta-oxidation. Functionally, catalyzes the final step of fatty acid oxidation in which acetyl-CoA is released and the CoA ester of a fatty acid two carbons shorter is formed. The protein is 3-ketoacyl-CoA thiolase of Pseudomonas fragi.